A 740-amino-acid polypeptide reads, in one-letter code: Phosphoribosylformylglycinamidine synthase subunit PurL (740 aa).

Histidine 50 is an active-site residue. ATP is bound by residues tyrosine 53 and lysine 92. Glutamate 94 contributes to the Mg(2+) binding site. Substrate-binding positions include 95 to 98 (SHNH) and arginine 117. Histidine 96 acts as the Proton acceptor in catalysis. Residue aspartate 118 coordinates Mg(2+). Glutamine 241 is a substrate binding site. Aspartate 269 contacts Mg(2+). A substrate-binding site is contributed by 313–315 (ESQ). ATP is bound by residues aspartate 495 and glycine 532. Asparagine 533 contacts Mg(2+). Residue serine 535 participates in substrate binding.

Belongs to the FGAMS family. As to quaternary structure, monomer. Part of the FGAM synthase complex composed of 1 PurL, 1 PurQ and 2 PurS subunits.

Its subcellular location is the cytoplasm. It carries out the reaction N(2)-formyl-N(1)-(5-phospho-beta-D-ribosyl)glycinamide + L-glutamine + ATP + H2O = 2-formamido-N(1)-(5-O-phospho-beta-D-ribosyl)acetamidine + L-glutamate + ADP + phosphate + H(+). Its pathway is purine metabolism; IMP biosynthesis via de novo pathway; 5-amino-1-(5-phospho-D-ribosyl)imidazole from N(2)-formyl-N(1)-(5-phospho-D-ribosyl)glycinamide: step 1/2. Its function is as follows. Part of the phosphoribosylformylglycinamidine synthase complex involved in the purines biosynthetic pathway. Catalyzes the ATP-dependent conversion of formylglycinamide ribonucleotide (FGAR) and glutamine to yield formylglycinamidine ribonucleotide (FGAM) and glutamate. The FGAM synthase complex is composed of three subunits. PurQ produces an ammonia molecule by converting glutamine to glutamate. PurL transfers the ammonia molecule to FGAR to form FGAM in an ATP-dependent manner. PurS interacts with PurQ and PurL and is thought to assist in the transfer of the ammonia molecule from PurQ to PurL. The sequence is that of Phosphoribosylformylglycinamidine synthase subunit PurL from Brucella canis (strain ATCC 23365 / NCTC 10854 / RM-666).